Here is a 138-residue protein sequence, read N- to C-terminus: ATP synthase epsilon chain (138 aa).

The protein belongs to the ATPase epsilon chain family. F-type ATPases have 2 components, CF(1) - the catalytic core - and CF(0) - the membrane proton channel. CF(1) has five subunits: alpha(3), beta(3), gamma(1), delta(1), epsilon(1). CF(0) has three main subunits: a, b and c.

It is found in the cell inner membrane. Its function is as follows. Produces ATP from ADP in the presence of a proton gradient across the membrane. In Geotalea daltonii (strain DSM 22248 / JCM 15807 / FRC-32) (Geobacter daltonii), this protein is ATP synthase epsilon chain.